The primary structure comprises 133 residues: Large ribosomal subunit protein bL19 (133 aa).

The protein belongs to the bacterial ribosomal protein bL19 family.

This protein is located at the 30S-50S ribosomal subunit interface and may play a role in the structure and function of the aminoacyl-tRNA binding site. The polypeptide is Large ribosomal subunit protein bL19 (Stenotrophomonas maltophilia (strain R551-3)).